The primary structure comprises 279 residues: Sperm acrosome membrane-associated protein 1 (279 aa).

The signal sequence occupies residues 1–29 (MKSRGAGCSARLLLTVGWLLLAGLQSTCG). Residues 30-221 (INVTAIQDPS…VIICIFVIFV (192 aa)) are Extracellular-facing. Asn-31 carries an N-linked (GlcNAc...) asparagine glycan. The tract at residues 39–74 (SLAREGEGEPEGDEEPENDSETEKEPQAEAEDDSEG) is disordered. Residues 46–58 (GEPEGDEEPENDS) are compositionally biased toward acidic residues. The helical transmembrane segment at 222–242 (LIFIIINWTAVKDFWAKASTT) threads the bilayer. At 243-279 (EIQSELSSMRYKDSTSLDQSPTDIPGHEDDALSEWNE) the chain is on the cytoplasmic side. Residue Tyr-253 is modified to Phosphotyrosine. Residues 253-279 (YKDSTSLDQSPTDIPGHEDDALSEWNE) are disordered. Phosphoserine is present on residues Ser-262 and Ser-275.

As to quaternary structure, interacts with CYLC1; the interaction may be relevant for proper acrosome attachment to the nuclear envelope. N-glycosylated.

The protein localises to the cytoplasmic vesicle. It is found in the secretory vesicle. The protein resides in the acrosome inner membrane. In terms of biological role, plays a role in acrosome expansion and establishment of normal sperm morphology during spermatogenesis. Important for male fertility. This is Sperm acrosome membrane-associated protein 1 (SPACA1) from Bos taurus (Bovine).